A 727-amino-acid chain; its full sequence is Synaptic vesicle glycoprotein 2C (727 aa).

Residues Met-1–Asp-57 are interaction with SYT1. Residues Met-1–Leu-154 are Cytoplasmic-facing. The disordered stretch occupies residues Val-22–Arg-120. A phosphoserine mark is found at Ser-75 and Ser-76. A Phosphothreonine modification is found at Thr-79. Residues Phe-155–Val-175 form a helical membrane-spanning segment. The Extracellular segment spans residues Leu-176 to Gly-191. Residues Trp-192 to Ala-212 traverse the membrane as a helical segment. Topologically, residues Asp-213–Ser-226 are cytoplasmic. Residues Val-227 to Cys-247 traverse the membrane as a helical segment. Residue Arg-248 is a topological domain, extracellular. The chain crosses the membrane as a helical span at residues Leu-249–Val-269. The Cytoplasmic segment spans residues Leu-270–Ser-280. The helical transmembrane segment at Trp-281–Ile-301 threads the bilayer. Topologically, residues Pro-302 to Arg-320 are extracellular. A helical membrane pass occupies residues Val-321–Pro-341. Residues Glu-342 to Thr-437 lie on the Cytoplasmic side of the membrane. A helical membrane pass occupies residues Ile-438–Ile-458. Residues Lys-459–Ser-578 lie on the Extracellular side of the membrane. Tyr-466 is modified (phosphotyrosine). 5 N-linked (GlcNAc...) asparagine glycosylation sites follow: Asn-480, Asn-484, Asn-534, Asn-559, and Asn-565. The (Microbial infection) C.botulinum neurotoxin type A-binding stretch occupies residues Asn-529–Lys-566. The helical transmembrane segment at Ala-579–Val-599 threads the bilayer. The Cytoplasmic segment spans residues Ser-600 to Arg-609. Residues Leu-610 to Gly-630 form a helical membrane-spanning segment. At Thr-631 to Met-636 the chain is on the extracellular side. Residues Ile-637–Val-657 form a helical membrane-spanning segment. The Cytoplasmic portion of the chain corresponds to Thr-658–Gly-670. A helical transmembrane segment spans residues Phe-671–Val-693. Residues Ser-694–Lys-697 lie on the Extracellular side of the membrane. Residues Ala-698–Leu-716 traverse the membrane as a helical segment. Residues Arg-717 to Met-727 lie on the Cytoplasmic side of the membrane.

It belongs to the major facilitator superfamily. Interacts with SYT1 in a calcium-dependent manner. In terms of assembly, (Microbial infection) Interacts with C.botulinum neurotoxin type A (BoNT/A, botA). As to quaternary structure, (Microbial infection) Interacts with C.botulinum neurotoxin type F (BoNT/F). Interaction requires glycosylation of SV2 proteins. In terms of processing, N-glycosylated. As to expression, expressed at high levels in very few brain areas including the striatum, midbrain and hindbrain, and in the olfactory bulb. Expressed at lower levels in cerebrum, hippocampus and cerebellum (at protein level). Mainly expressed in brain; also detected in lung, liver, kidney.

Its subcellular location is the cytoplasmic vesicle. The protein localises to the secretory vesicle. It is found in the synaptic vesicle membrane. In terms of biological role, plays a role in the control of regulated secretion in neural and endocrine cells, enhancing selectively low-frequency neurotransmission. Positively regulates vesicle fusion by maintaining the readily releasable pool of secretory vesicles. (Microbial infection) Receptor for C.botulinum neurotoxin type A (BoNT/A, botA); the toxin binds Sv2c via extracellular loop 4. Restores uptake of BoNT/A in rat cells that are deleted for SV2 receptor. Functionally, (Microbial infection) Possible receptor for C.botulinum neurotoxin type D (BoNT/D, botD); BoNT/D does not bind to extracellular loop 4 as do BoNT/A and BoNT/E. Another group does not find a convincing interaction with SV2. Its function is as follows. (Microbial infection) Receptor for C.botulinum neurotoxin type F (BoNT/F); binding requires glycosylation of Asn-573. This chain is Synaptic vesicle glycoprotein 2C (Sv2c), found in Rattus norvegicus (Rat).